The chain runs to 779 residues: uncharacterized protein (779 aa).

Ser97 and Ser120 each carry phosphoserine. Positions 125 to 135 are enriched in basic and acidic residues; sequence EIDGEDEKKSV. Residues 125–174 form a disordered region; the sequence is EIDGEDEKKSVGQESITGSAKRKDRRSKTNGSKRQKAEANREPPSDISLS. Over residues 144–158 the composition is skewed to basic residues; that stretch reads AKRKDRRSKTNGSKR. Residues 159 to 168 show a composition bias toward basic and acidic residues; it reads QKAEANREPP. ATP-binding positions include 215–222 and 533–540; these read GPPGCGKT. Residues 759–779 are disordered; sequence DRQKYQRLAKRWSSASTNDAD.

This sequence belongs to the AAA ATPase family.

The protein resides in the nucleus. This is an uncharacterized protein from Schizosaccharomyces pombe (strain 972 / ATCC 24843) (Fission yeast).